Here is a 66-residue protein sequence, read N- to C-terminus: Large ribosomal subunit protein bL35 (66 aa).

The span at Met-1–Lys-46 shows a compositional bias: basic residues. The disordered stretch occupies residues Met-1–Arg-52.

Belongs to the bacterial ribosomal protein bL35 family.

This is Large ribosomal subunit protein bL35 from Lactobacillus acidophilus (strain ATCC 700396 / NCK56 / N2 / NCFM).